A 286-amino-acid polypeptide reads, in one-letter code: L-cysteine S-thiosulfotransferase subunit SoxA (286 aa).

The signal sequence occupies residues 1 to 27 (MKKTIQRGLFTGALVLMTAMTAKPANA). C106 and C137 are disulfide-bonded. Residues 180 to 286 (DAYMKGKKFF…LKYNGPASRK (107 aa)) enclose the Cytochrome c domain. Heme is bound by residues C200 and H204. R243 contacts substrate. Heme is bound at residue C247. The active-site Cysteine persulfide intermediate is C247.

The protein belongs to the SoxA family. Heterodimer of SoxA and SoxX. The SoxAX complex interacts with CT1020, SoxAX-binding protein SaxB (SoxK); this interaction seems to be between SoxA and CT1020 and stimulates catalytic activity of the SoxAX complex. Heme is required as a cofactor. In terms of processing, cysteine persulfide at Cys-247.

It is found in the periplasm. The enzyme catalyses L-cysteinyl-[SoxY protein] + thiosulfate + 2 Fe(III)-[cytochrome c] = S-sulfosulfanyl-L-cysteinyl-[SoxY protein] + 2 Fe(II)-[cytochrome c] + 2 H(+). It catalyses the reaction S-sulfanyl-L-cysteinyl-[SoxY protein] + thiosulfate + 2 Fe(III)-[cytochrome c] = S-(2-sulfodisulfanyl)-L-cysteinyl-[SoxY protein] + 2 Fe(II)-[cytochrome c] + 2 H(+). C-type monoheme cytochrome, which is part of the SoxAX cytochrome complex involved in sulfur oxidation. The SoxAX complex catalyzes the formation of a heterodisulfide bond between the conserved cysteine residue on a sulfur carrier SoxYZ complex subunit SoxY and thiosulfate or other inorganic sulfur substrates. This leads to the liberation of two electrons, which may be transferred from the SoxAX complex to another cytochrome c and which then may be used for reductive CO(2) fixation. The protein is L-cysteine S-thiosulfotransferase subunit SoxA of Chlorobaculum tepidum (strain ATCC 49652 / DSM 12025 / NBRC 103806 / TLS) (Chlorobium tepidum).